The following is a 233-amino-acid chain: MSPQDRPSRTTEAFFGRRRGKPVRPQQAAALESGLDAYRLDLTADAPSDLRTLFETEVSAVRLEIGFGGGEHLLHRAIEAPTTGFIGVEPFVNGMAKMMMAVRARPLANLRVHDDDATRLLDWLPPASLGGIDLLYPDPWPKKKHWKRRFVSPVNLERFARVLKPGAKFRFASDIDTYVNWTLLHCRAHGAFAWQAAEAADWHRPYEGWPGTRYEAKAIREGRRPAYLTFVRK.

The segment at 1–23 is disordered; it reads MSPQDRPSRTTEAFFGRRRGKPV. Glu-64, Glu-89, Asp-116, and Asp-138 together coordinate S-adenosyl-L-methionine. Asp-138 is an active-site residue. Substrate contacts are provided by residues Lys-142, Asp-174, and 212-215; that span reads TRYE.

This sequence belongs to the class I-like SAM-binding methyltransferase superfamily. TrmB family.

The catalysed reaction is guanosine(46) in tRNA + S-adenosyl-L-methionine = N(7)-methylguanosine(46) in tRNA + S-adenosyl-L-homocysteine. It functions in the pathway tRNA modification; N(7)-methylguanine-tRNA biosynthesis. Its function is as follows. Catalyzes the formation of N(7)-methylguanine at position 46 (m7G46) in tRNA. This is tRNA (guanine-N(7)-)-methyltransferase from Mesorhizobium japonicum (strain LMG 29417 / CECT 9101 / MAFF 303099) (Mesorhizobium loti (strain MAFF 303099)).